The sequence spans 109 residues: MSEFKRIPPEQAQALREQGAVVVDIRDPQTYALNHISGSQHLDNHSISDFIRAADLDAPLVVVCYHGNSSQSAAAYLVSQGFSDVYSLDGGFELWRSTYPAETAQGNPE.

Residues 16 to 104 (REQGAVVVDI…WRSTYPAETA (89 aa)) enclose the Rhodanese domain. Catalysis depends on C64, which acts as the Cysteine persulfide intermediate.

Belongs to the GlpE family.

It localises to the cytoplasm. The enzyme catalyses thiosulfate + hydrogen cyanide = thiocyanate + sulfite + 2 H(+). It carries out the reaction thiosulfate + [thioredoxin]-dithiol = [thioredoxin]-disulfide + hydrogen sulfide + sulfite + 2 H(+). In terms of biological role, transferase that catalyzes the transfer of sulfur from thiosulfate to thiophilic acceptors such as cyanide or dithiols. May function in a CysM-independent thiosulfate assimilation pathway by catalyzing the conversion of thiosulfate to sulfite, which can then be used for L-cysteine biosynthesis. The sequence is that of Thiosulfate sulfurtransferase GlpE from Pseudomonas fluorescens (strain ATCC BAA-477 / NRRL B-23932 / Pf-5).